The chain runs to 427 residues: Adenylosuccinate synthetase (427 aa).

Residues 12 to 18 (GDEGKGK) and 40 to 42 (GHT) contribute to the GTP site. Asp13 (proton acceptor) is an active-site residue. Mg(2+) is bound by residues Asp13 and Gly40. IMP is bound by residues 13–16 (DEGK), 38–41 (NAGH), Thr128, Arg142, Gln223, Thr238, and Arg302. His41 serves as the catalytic Proton donor. 298–304 (TTTGRPR) serves as a coordination point for substrate. GTP-binding positions include Arg304, 330–332 (SID), and 412–414 (SVG).

Belongs to the adenylosuccinate synthetase family. Homodimer. It depends on Mg(2+) as a cofactor.

Its subcellular location is the cytoplasm. The catalysed reaction is IMP + L-aspartate + GTP = N(6)-(1,2-dicarboxyethyl)-AMP + GDP + phosphate + 2 H(+). It participates in purine metabolism; AMP biosynthesis via de novo pathway; AMP from IMP: step 1/2. In terms of biological role, plays an important role in the de novo pathway of purine nucleotide biosynthesis. Catalyzes the first committed step in the biosynthesis of AMP from IMP. The sequence is that of Adenylosuccinate synthetase from Staphylococcus epidermidis (strain ATCC 35984 / DSM 28319 / BCRC 17069 / CCUG 31568 / BM 3577 / RP62A).